Reading from the N-terminus, the 151-residue chain is ALK and LTK ligand 2 (151 aa).

An N-terminal signal peptide occupies residues 1-25; sequence MRVSGRPMLLALLLLLSTVGDPGHA. 2 disulfides stabilise this stretch: C112–C148 and C126–C135.

The protein belongs to the ALKAL family. As to quaternary structure, homodimer.

The protein resides in the secreted. Its subcellular location is the cell membrane. Functionally, cytokine that acts as a physiological ligand for receptor tyrosine kinases LTK and ALK, leading to their activation. Cytokine-binding is sufficient to activate LTK. In contrast, ALKAL2-driven activation of ALK is coupled with heparin-binding to ALK. Stimulation of ALK signaling is involved in neural development and regulation of energy expenditure. The sequence is that of ALK and LTK ligand 2 from Rattus norvegicus (Rat).